The following is a 388-amino-acid chain: Putative 8-amino-7-oxononanoate synthase (388 aa).

R23 is a substrate binding site. 110 to 111 (GY) contacts pyridoxal 5'-phosphate. Substrate is bound at residue H135. Residues S182, 207-210 (DDAH), and 238-241 (TLSK) each bind pyridoxal 5'-phosphate. K241 is subject to N6-(pyridoxal phosphate)lysine. Position 355 (T355) interacts with substrate.

The protein belongs to the class-II pyridoxal-phosphate-dependent aminotransferase family. BioF subfamily. Homodimer. It depends on pyridoxal 5'-phosphate as a cofactor.

The enzyme catalyses 6-carboxyhexanoyl-[ACP] + L-alanine + H(+) = (8S)-8-amino-7-oxononanoate + holo-[ACP] + CO2. It functions in the pathway cofactor biosynthesis; biotin biosynthesis. In terms of biological role, catalyzes the decarboxylative condensation of pimeloyl-[acyl-carrier protein] and L-alanine to produce 8-amino-7-oxononanoate (AON), [acyl-carrier protein], and carbon dioxide. The sequence is that of Putative 8-amino-7-oxononanoate synthase (bioF) from Thermodesulfovibrio yellowstonii (strain ATCC 51303 / DSM 11347 / YP87).